Reading from the N-terminus, the 172-residue chain is Small ribosomal subunit protein uS4 (172 aa).

One can recognise an S4 RNA-binding domain in the interval 104 to 168 (RRLQTIVYRK…SPLAKMAQGG (65 aa)).

It belongs to the universal ribosomal protein uS4 family. In terms of assembly, part of the 30S ribosomal subunit. Contacts protein S5. The interaction surface between S4 and S5 is involved in control of translational fidelity.

One of the primary rRNA binding proteins, it binds directly to 16S rRNA where it nucleates assembly of the body of the 30S subunit. Its function is as follows. With S5 and S12 plays an important role in translational accuracy. The protein is Small ribosomal subunit protein uS4 of Thermofilum pendens (strain DSM 2475 / Hrk 5).